Reading from the N-terminus, the 584-residue chain is Alkaline nuclease (584 aa).

A disordered region spans residues 409 to 430 (GGGADHHLRGSPGDSPPPIPFE).

It belongs to the herpesviridae alkaline nuclease family. In terms of assembly, interacts with major DNA-binding protein; this interaction increases the nuclease processivity of the alkaline exonuclease.

Its subcellular location is the host nucleus. It is found in the host cytoplasm. Functionally, plays a role in processing non linear or branched viral DNA intermediates in order to promote the production of mature packaged unit-length linear progeny viral DNA molecules. Exhibits endonuclease and exonuclease activities and accepts both double-stranded and single-stranded DNA as substrate. Exonuclease digestion of DNA is in the 5'-&gt; 3' direction and the products are 5'-monophosphate nucleosides. Additionally, forms a recombinase with the major DNA-binding protein, which displays strand exchange activity. The polypeptide is Alkaline nuclease (UL98) (Human cytomegalovirus (strain AD169) (HHV-5)).